A 334-amino-acid chain; its full sequence is Proline-serine-threonine phosphatase-interacting protein 2 (334 aa).

Residues 4-264 (SLFKGNFWSA…SLEMCSIQRD (261 aa)) enclose the F-BAR domain. The stretch at 66-166 (GQSEINTLKR…AVSRSANLVN (101 aa)) forms a coiled coil. The segment at 295-322 (VPAGKATGPNLARRGPLPIPKSSPDDPN) is disordered. Tyrosine 323 and tyrosine 329 each carry phosphotyrosine.

Phosphorylated on tyrosine.

It is found in the cytoplasm. The protein resides in the membrane. Its function is as follows. Binds to F-actin. May be involved in regulation of the actin cytoskeleton. In Homo sapiens (Human), this protein is Proline-serine-threonine phosphatase-interacting protein 2 (PSTPIP2).